A 96-amino-acid polypeptide reads, in one-letter code: Co-chaperonin GroES (96 aa).

Belongs to the GroES chaperonin family. In terms of assembly, heptamer of 7 subunits arranged in a ring. Interacts with the chaperonin GroEL.

It is found in the cytoplasm. Functionally, together with the chaperonin GroEL, plays an essential role in assisting protein folding. The GroEL-GroES system forms a nano-cage that allows encapsulation of the non-native substrate proteins and provides a physical environment optimized to promote and accelerate protein folding. GroES binds to the apical surface of the GroEL ring, thereby capping the opening of the GroEL channel. In Hydrogenobaculum sp. (strain Y04AAS1), this protein is Co-chaperonin GroES.